The following is a 226-amino-acid chain: Leucyl/phenylalanyl-tRNA--protein transferase (226 aa).

Belongs to the L/F-transferase family.

The protein resides in the cytoplasm. It catalyses the reaction N-terminal L-lysyl-[protein] + L-leucyl-tRNA(Leu) = N-terminal L-leucyl-L-lysyl-[protein] + tRNA(Leu) + H(+). The catalysed reaction is N-terminal L-arginyl-[protein] + L-leucyl-tRNA(Leu) = N-terminal L-leucyl-L-arginyl-[protein] + tRNA(Leu) + H(+). The enzyme catalyses L-phenylalanyl-tRNA(Phe) + an N-terminal L-alpha-aminoacyl-[protein] = an N-terminal L-phenylalanyl-L-alpha-aminoacyl-[protein] + tRNA(Phe). Its function is as follows. Functions in the N-end rule pathway of protein degradation where it conjugates Leu, Phe and, less efficiently, Met from aminoacyl-tRNAs to the N-termini of proteins containing an N-terminal arginine or lysine. The sequence is that of Leucyl/phenylalanyl-tRNA--protein transferase from Pseudomonas putida (strain W619).